Consider the following 179-residue polypeptide: Cell division protein ZapC (179 aa).

It belongs to the ZapC family. As to quaternary structure, interacts directly with FtsZ.

Its subcellular location is the cytoplasm. Contributes to the efficiency of the cell division process by stabilizing the polymeric form of the cell division protein FtsZ. Acts by promoting interactions between FtsZ protofilaments and suppressing the GTPase activity of FtsZ. This Tolumonas auensis (strain DSM 9187 / NBRC 110442 / TA 4) protein is Cell division protein ZapC.